The following is a 1155-amino-acid chain: RHO1 GDP-GTP exchange protein 1 (1155 aa).

Methionine 1 carries the post-translational modification N-acetylmethionine. The segment covering 100–143 (NSSPQSFTGDQISPTNKKISINDSTRQDKGNSCTTTSSPSQKRS) has biased composition (polar residues). The disordered stretch occupies residues 100-249 (NSSPQSFTGD…HSRSKSSPVS (150 aa)). Residues serine 154 and serine 155 each carry the phosphoserine modification. The span at 155–167 (SPSLLSFSKNSGS) shows a compositional bias: low complexity. Phosphothreonine is present on threonine 180. Over residues 190–227 (LHSSFNGKHSSSSTSSLFALESLKTQNRRSSNSSNHSS) the composition is skewed to low complexity. The span at 228–243 (QYRRHTNQHQRHHSRS) shows a compositional bias: basic residues. At serine 433 the chain carries Phosphoserine. The region spanning 464-651 (KRQEAIYELF…KDLMKRIDRA (188 aa)) is the DH domain. Residues 842–1137 (TNRVNDVLIC…RMLKSYAKKI (296 aa)) enclose the CNH domain.

In terms of biological role, stimulates the exchange of RHO1 GDP-bound form into GTP-bound form. The polypeptide is RHO1 GDP-GTP exchange protein 1 (ROM1) (Saccharomyces cerevisiae (strain ATCC 204508 / S288c) (Baker's yeast)).